The primary structure comprises 24 residues: Brevinin-1Ra (24 aa).

Cys18 and Cys24 are disulfide-bonded.

As to expression, expressed by the skin glands.

It is found in the secreted. Its function is as follows. Antimicrobial peptide. The chain is Brevinin-1Ra from Pelophylax ridibundus (Marsh frog).